The sequence spans 66 residues: Protein I177L (66 aa).

The protein belongs to the asfivirus I177L family.

The protein localises to the virion. This is Protein I177L from Ornithodoros (relapsing fever ticks).